The primary structure comprises 317 residues: Beta-ketoacyl-[acyl-carrier-protein] synthase III (317 aa).

Active-site residues include cysteine 112 and histidine 244. The segment at 245-249 (QANLR) is ACP-binding. Asparagine 274 is an active-site residue.

The protein belongs to the thiolase-like superfamily. FabH family. In terms of assembly, homodimer.

The protein localises to the cytoplasm. It carries out the reaction malonyl-[ACP] + acetyl-CoA + H(+) = 3-oxobutanoyl-[ACP] + CO2 + CoA. It participates in lipid metabolism; fatty acid biosynthesis. Functionally, catalyzes the condensation reaction of fatty acid synthesis by the addition to an acyl acceptor of two carbons from malonyl-ACP. Catalyzes the first condensation reaction which initiates fatty acid synthesis and may therefore play a role in governing the total rate of fatty acid production. Possesses both acetoacetyl-ACP synthase and acetyl transacylase activities. Its substrate specificity determines the biosynthesis of branched-chain and/or straight-chain of fatty acids. This chain is Beta-ketoacyl-[acyl-carrier-protein] synthase III, found in Blochmanniella pennsylvanica (strain BPEN).